Reading from the N-terminus, the 287-residue chain is ATP synthase gamma chain (287 aa).

This sequence belongs to the ATPase gamma chain family. As to quaternary structure, F-type ATPases have 2 components, CF(1) - the catalytic core - and CF(0) - the membrane proton channel. CF(1) has five subunits: alpha(3), beta(3), gamma(1), delta(1), epsilon(1). CF(0) has three main subunits: a, b and c.

The protein localises to the cell membrane. Produces ATP from ADP in the presence of a proton gradient across the membrane. The gamma chain is believed to be important in regulating ATPase activity and the flow of protons through the CF(0) complex. The polypeptide is ATP synthase gamma chain (Geobacillus stearothermophilus (Bacillus stearothermophilus)).